We begin with the raw amino-acid sequence, 225 residues long: Octanoyltransferase (225 aa).

One can recognise a BPL/LPL catalytic domain in the interval Gly-43–Gly-225. Substrate contacts are provided by residues Arg-82–His-89, Ala-157–Gly-159, and Gly-170–Ser-172. The Acyl-thioester intermediate role is filled by Cys-188.

This sequence belongs to the LipB family.

Its subcellular location is the cytoplasm. The catalysed reaction is octanoyl-[ACP] + L-lysyl-[protein] = N(6)-octanoyl-L-lysyl-[protein] + holo-[ACP] + H(+). Its pathway is protein modification; protein lipoylation via endogenous pathway; protein N(6)-(lipoyl)lysine from octanoyl-[acyl-carrier-protein]: step 1/2. Catalyzes the transfer of endogenously produced octanoic acid from octanoyl-acyl-carrier-protein onto the lipoyl domains of lipoate-dependent enzymes. Lipoyl-ACP can also act as a substrate although octanoyl-ACP is likely to be the physiological substrate. This is Octanoyltransferase from Parvibaculum lavamentivorans (strain DS-1 / DSM 13023 / NCIMB 13966).